The chain runs to 151 residues: MD-2-related lipid-recognition protein (151 aa).

Positions 1-18 are cleaved as a signal peptide; sequence MAALHWLLLAALLGCTLA. 3 disulfides stabilise this stretch: Cys-27-Cys-141, Cys-45-Cys-51, and Cys-95-Cys-100. Asn-58 carries N-linked (GlcNAc...) asparagine glycosylation.

In terms of processing, N-glycosylated. In terms of tissue distribution, hemolymph (at protein level). Constitutively expressed mainly in fat body and also in hemocytes and secreted into hemolymph. Not detected in midgut, epidermis, or Malpighian tubule of naive larvae.

The protein resides in the secreted. Its function is as follows. Binds to lipopolysaccharide from a variety of Gram-negative bacteria and to lipid A. This chain is MD-2-related lipid-recognition protein, found in Manduca sexta (Tobacco hawkmoth).